Reading from the N-terminus, the 496-residue chain is Probable CtpA-like serine protease (496 aa).

Residues 1–16 (MDDKQHTTSSDDERAE) show a composition bias toward basic and acidic residues. The interval 1–27 (MDDKQHTTSSDDERAENATSNQDQQTN) is disordered. The segment covering 17–27 (NATSNQDQQTN) has biased composition (polar residues). A helical transmembrane segment spans residues 39-59 (FISILIGTIIITAVITVVAYI). The 83-residue stretch at 124-206 (TKSFNEGVSG…TEVTLTVQRG (83 aa)) folds into the PDZ domain. Catalysis depends on charge relay system residues Ser-329, Asp-340, and Lys-354.

This sequence belongs to the peptidase S41A family.

It localises to the cell membrane. The chain is Probable CtpA-like serine protease from Staphylococcus aureus (strain MRSA252).